Here is a 257-residue protein sequence, read N- to C-terminus: Short chain dehydrogenase ausX (257 aa).

NADP(+) is bound by residues Ile11, Asp57, Arg119, Tyr151, Lys155, and Val184. Tyr151 serves as the catalytic Proton acceptor. The active-site Lowers pKa of active site Tyr is Lys155.

This sequence belongs to the short-chain dehydrogenases/reductases (SDR) family.

It participates in secondary metabolite biosynthesis; terpenoid biosynthesis. In terms of biological role, short chain dehydrogenase; part of the gene cluster that mediates the biosynthesis of calidodehydroaustin, a fungal meroterpenoid. The first step of the pathway is the synthesis of 3,5-dimethylorsellinic acid by the polyketide synthase ausA. 3,5-dimethylorsellinic acid is then prenylated by the polyprenyl transferase ausN. Further epoxidation by the FAD-dependent monooxygenase ausM and cyclization by the probable terpene cyclase ausL lead to the formation of protoaustinoid A. Protoaustinoid A is then oxidized to spiro-lactone preaustinoid A3 by the combined action of the FAD-binding monooxygenases ausB and ausC, and the dioxygenase ausE. Acid-catalyzed keto-rearrangement and ring contraction of the tetraketide portion of preaustinoid A3 by ausJ lead to the formation of preaustinoid A4. The aldo-keto reductase ausK, with the help of ausH, is involved in the next step by transforming preaustinoid A4 into isoaustinone which is in turn hydroxylated by the P450 monooxygenase ausI to form austinolide. The cytochrome P450 monooxygenase ausG modifies austinolide to austinol. Austinol is further acetylated to austin by the O-acetyltransferase ausP, which spontaneously changes to dehydroaustin. The cytochrome P450 monooxygenase ausR then converts dehydroaustin is into 7-dehydrodehydroaustin. The hydroxylation catalyzed by ausR permits the O-acetyltransferase ausQ to add an additional acetyl group to the molecule, leading to the formation of acetoxydehydroaustin. The short chain dehydrogenase ausT catalyzes the reduction of the double bond present between carbon atoms 1 and 2 to convert 7-dehydrodehydroaustin into 1,2-dihydro-7-hydroxydehydroaustin. AusQ catalyzes not only an acetylation reaction but also the addition of the PKS ausV diketide product to 1,2-dihydro-7-hydroxydehydroaustin, forming precalidodehydroaustin. Finally, the iron/alpha-ketoglutarate-dependent dioxygenase converts precalidodehydroaustin into calidodehydroaustin. The protein is Short chain dehydrogenase ausX of Aspergillus calidoustus.